Here is a 1102-residue protein sequence, read N- to C-terminus: DNA-directed RNA polymerase subunit beta (1102 aa).

Residues 1076–1102 (IDSQRRAPNRPTYESLHTEEDLEEEEV) are disordered.

The protein belongs to the RNA polymerase beta chain family. As to quaternary structure, in cyanobacteria the RNAP catalytic core is composed of 2 alpha, 1 beta, 1 beta', 1 gamma and 1 omega subunit. When a sigma factor is associated with the core the holoenzyme is formed, which can initiate transcription.

The enzyme catalyses RNA(n) + a ribonucleoside 5'-triphosphate = RNA(n+1) + diphosphate. Functionally, DNA-dependent RNA polymerase catalyzes the transcription of DNA into RNA using the four ribonucleoside triphosphates as substrates. The protein is DNA-directed RNA polymerase subunit beta of Synechocystis sp. (strain ATCC 27184 / PCC 6803 / Kazusa).